Reading from the N-terminus, the 218-residue chain is Octanoyltransferase (218 aa).

The region spanning 31–206 (REAGDEVWLV…QLVKHLDYAE (176 aa)) is the BPL/LPL catalytic domain. Substrate-binding positions include 70-77 (RGGQVTYH), 137-139 (SLG), and 150-152 (GLA). Cys-168 acts as the Acyl-thioester intermediate in catalysis.

It belongs to the LipB family.

The protein resides in the cytoplasm. It catalyses the reaction octanoyl-[ACP] + L-lysyl-[protein] = N(6)-octanoyl-L-lysyl-[protein] + holo-[ACP] + H(+). It participates in protein modification; protein lipoylation via endogenous pathway; protein N(6)-(lipoyl)lysine from octanoyl-[acyl-carrier-protein]: step 1/2. In terms of biological role, catalyzes the transfer of endogenously produced octanoic acid from octanoyl-acyl-carrier-protein onto the lipoyl domains of lipoate-dependent enzymes. Lipoyl-ACP can also act as a substrate although octanoyl-ACP is likely to be the physiological substrate. This chain is Octanoyltransferase, found in Pseudomonas syringae pv. tomato (strain ATCC BAA-871 / DC3000).